Reading from the N-terminus, the 357-residue chain is MLHVTCQGTPSEIGYHHGSAAKGEIAKAIDFATGLIHGKTKKTQAELEQLLRELEQVMKQRWPRYYEEICGIAKGAEREVSEIVMLNTRTEFAYGLVEARDGCTTVYCKTPNGALQGQNWDFFTATKENLIQLTICQPGLPTIKMITEAGIIGKVGFNSAGVAVNYNALHLHGLRPTGLPSHLALRMALESTSPSEAYEKIVSQGGMAASAFIMVGNAHEAYGLEFSPISLCKQVADTNGRIVHTNHCLLNHGPSAQELNPLPDSWSRHGRMEHLLSGFDGTKEAFAKLWEDEDNYPLSICRAYKEGKSRGSTLFNIVFDHVGRKATVRLGRPNNPDETFVMTFSNLDTKSAIQANI.

Asp-121 and Arg-310 together coordinate 6-aminopenicillanate.

Belongs to the peptidase C45 family. In terms of assembly, the active form of the enzyme results from processing of the 40-kDa monomeric precursor to a heterodimer containing subunits of 11 and 29 kDa. In terms of processing, the pre-AAT protein is synthesized as 40 kDa precursor which is then self-processed into an 11 kDa (protein A) and a 29 kDa (protein B). The B protein carries AAT activity.

It localises to the peroxisome matrix. It carries out the reaction isopenicillin N + phenylacetyl-CoA + H2O = penicillin G + L-2-aminoadipate + CoA + H(+). The protein operates within antibiotic biosynthesis; penicillin G biosynthesis; penicillin G from L-alpha-aminoadipate and L-cysteine and L-valine: step 3/3. Functionally, nonribosomal peptide synthetase; part of the gene cluster that mediates the biosynthesis of penicillin, the world's most important antibiotic. AatA catalyzes the exchange of the alpha-aminoadipyl side chain of isopenicillin N for phenylacetic acid to yield penicillin. This step occurs in the peroxisomal matrix and the penM and paaT transporters are involved in the isopenicillin N and phenylacetic acid import into the peroxisome, respectively. The penicillin biosynthesis occurs via 3 enzymatic steps, the first corresponding to the production of the tripeptide N-[(5S)-5-amino-5-carboxypentanoyl]-L-cysteinyl-D-valine (LLD-ACV or ACV) by the NRPS acvA. The tripeptide ACV is then cyclized to isopenicillin N (IPN) by the isopenicillin N synthase ipnA that forms the beta-lactam nucleus. Finally, the alpha-aminoadipyl side chain is exchanged for phenylacetic acid by the isopenicillin N acyltransferase penDE to yield penicillin in the peroxisomal matrix. The polypeptide is Acyl-coenzyme A:6-aminopenicillanic-acid-acyltransferase 40 kDa form (Emericella nidulans (strain FGSC A4 / ATCC 38163 / CBS 112.46 / NRRL 194 / M139) (Aspergillus nidulans)).